Reading from the N-terminus, the 146-residue chain is Hut operon positive regulatory protein (146 aa).

This sequence belongs to the HutP family. As to quaternary structure, homohexamer.

Its function is as follows. Antiterminator that binds to cis-acting regulatory sequences on the mRNA in the presence of histidine, thereby suppressing transcription termination and activating the hut operon for histidine utilization. The polypeptide is Hut operon positive regulatory protein (Bacillus cereus (strain ZK / E33L)).